The sequence spans 313 residues: Formimidoylglutamase (313 aa).

Mn(2+) is bound by residues histidine 130, aspartate 155, histidine 157, aspartate 159, aspartate 241, and aspartate 243.

This sequence belongs to the arginase family. Mn(2+) serves as cofactor.

It catalyses the reaction N-formimidoyl-L-glutamate + H2O = formamide + L-glutamate. The protein operates within amino-acid degradation; L-histidine degradation into L-glutamate; L-glutamate from N-formimidoyl-L-glutamate (hydrolase route): step 1/1. In terms of biological role, catalyzes the conversion of N-formimidoyl-L-glutamate to L-glutamate and formamide. The sequence is that of Formimidoylglutamase from Salmonella typhi.